The following is a 262-amino-acid chain: Putative glycyl-radical enzyme activating enzyme HI_0520 (262 aa).

One can recognise a Radical SAM core domain in the interval 20 to 262 (VEGQGNRSSI…CGINKILTIL (243 aa)). [4Fe-4S] cluster-binding residues include C34, C38, and C41. S-adenosyl-L-methionine-binding positions include 40 to 42 (YCH), G81, and 130 to 132 (DLK).

It belongs to the organic radical-activating enzymes family. [4Fe-4S] cluster serves as cofactor.

The catalysed reaction is glycyl-[protein] + reduced [flavodoxin] + S-adenosyl-L-methionine = glycin-2-yl radical-[protein] + semiquinone [flavodoxin] + 5'-deoxyadenosine + L-methionine + H(+). This Haemophilus influenzae (strain ATCC 51907 / DSM 11121 / KW20 / Rd) protein is Putative glycyl-radical enzyme activating enzyme HI_0520.